Here is a 322-residue protein sequence, read N- to C-terminus: Transaldolase (322 aa).

The active-site Schiff-base intermediate with substrate is the Lys136.

The protein belongs to the transaldolase family. Type 1 subfamily. As to quaternary structure, homodimer.

The protein resides in the cytoplasm. The catalysed reaction is D-sedoheptulose 7-phosphate + D-glyceraldehyde 3-phosphate = D-erythrose 4-phosphate + beta-D-fructose 6-phosphate. The protein operates within carbohydrate degradation; pentose phosphate pathway; D-glyceraldehyde 3-phosphate and beta-D-fructose 6-phosphate from D-ribose 5-phosphate and D-xylulose 5-phosphate (non-oxidative stage): step 2/3. Functionally, transaldolase is important for the balance of metabolites in the pentose-phosphate pathway. The protein is Transaldolase of Xanthomonas campestris pv. campestris (strain B100).